Reading from the N-terminus, the 924-residue chain is Lipoxygenase 7, chloroplastic (924 aa).

Residues 1 to 61 (MLRPQLNPSS…GQGSSRVVVV (61 aa)) constitute a chloroplast transit peptide. In terms of domain architecture, PLAT spans 88–218 (AVATIKVTVG…VGDEGTPSKR (131 aa)). The Lipoxygenase domain maps to 225–924 (TYLPGQTPAG…GMGIPNSTSI (700 aa)). Residues 231-315 (TPAGLRSYRK…PKSETRKGNV (85 aa)) are disordered. Composition is skewed to basic and acidic residues over residues 239–262 (RKND…RVYD) and 302–315 (SKKD…KGNV). Residues His581, His586, His773, Asn777, and Ile924 each contribute to the Fe cation site.

The protein belongs to the lipoxygenase family. Requires Fe cation as cofactor.

The protein resides in the plastid. Its subcellular location is the chloroplast. It catalyses the reaction (9Z,12Z)-octadecadienoate + O2 = (13S)-hydroperoxy-(9Z,11E)-octadecadienoate. The catalysed reaction is (9Z,12Z,15Z)-octadecatrienoate + O2 = (13S)-hydroperoxy-(9Z,11E,15Z)-octadecatrienoate. It functions in the pathway lipid metabolism; oxylipin biosynthesis. Its function is as follows. Plant lipoxygenase may be involved in a number of diverse aspects of plant physiology including growth and development, pest resistance, and senescence or responses to wounding. This lipoxygenase introduces molecular oxygen exclusively into the C-13 position of linoleic and linolenic acids. This is Lipoxygenase 7, chloroplastic (CM-LOX1) from Oryza sativa subsp. japonica (Rice).